The following is an 89-amino-acid chain: Small ribosomal subunit protein uS15 (89 aa).

Belongs to the universal ribosomal protein uS15 family. Part of the 30S ribosomal subunit. Forms a bridge to the 50S subunit in the 70S ribosome, contacting the 23S rRNA.

One of the primary rRNA binding proteins, it binds directly to 16S rRNA where it helps nucleate assembly of the platform of the 30S subunit by binding and bridging several RNA helices of the 16S rRNA. In terms of biological role, forms an intersubunit bridge (bridge B4) with the 23S rRNA of the 50S subunit in the ribosome. The polypeptide is Small ribosomal subunit protein uS15 (Paracoccus denitrificans (strain Pd 1222)).